Reading from the N-terminus, the 62-residue chain is Small ribosomal subunit protein eS27 (62 aa).

Zn(2+) contacts are provided by C17, C20, C36, and C39. Residues C17 to C39 form a C4-type zinc finger.

The protein belongs to the eukaryotic ribosomal protein eS27 family. Part of the 30S ribosomal subunit. Zn(2+) is required as a cofactor.

This Methanoculleus marisnigri (strain ATCC 35101 / DSM 1498 / JR1) protein is Small ribosomal subunit protein eS27.